We begin with the raw amino-acid sequence, 306 residues long: Low density lipoprotein receptor adapter protein 1 (306 aa).

Position 1 is an N-acetylmethionine (Met-1). The residue at position 14 (Ser-14) is a Phosphoserine. Residues 44-168 form the PID domain; the sequence is GMVFSLKYLG…VAQAFKVAFE (125 aa). The disordered stretch occupies residues 178 to 204; that stretch reads EKREKANQEGGDVPGTRRDSTPSLKTS. Ser-197 and Ser-200 each carry phosphoserine. A Clathrin box motif is present at residues 210 to 214; it reads LLDLE. The tract at residues 247-274 is AP-2 complex binding; that stretch reads WELDDGLDEAFSRLAQSRTNPQVLDTGL. The [DE]-X(1,2)-F-X-X-[FL]-X-X-X-R motif motif lies at 255-264; the sequence is EAFSRLAQSR.

As to quaternary structure, interacts (via PID domain) with LDLR (via NPXY motifs). Binds to soluble clathrin trimers. Interacts with AP2B1; the interaction mediates the association with the AP-2 complex. Interacts with VLDLR. Interacts with LRP2.

It localises to the cytoplasm. Adapter protein (clathrin-associated sorting protein (CLASP)) required for efficient endocytosis of the LDL receptor (LDLR) in polarized cells such as hepatocytes and lymphocytes, but not in non-polarized cells (fibroblasts). May be required for LDL binding and internalization but not for receptor clustering in coated pits. May facilitate the endocytosis of LDLR and LDLR-LDL complexes from coated pits by stabilizing the interaction between the receptor and the structural components of the pits. May also be involved in the internalization of other LDLR family members. Binds to phosphoinositides, which regulate clathrin bud assembly at the cell surface. Required for trafficking of LRP2 to the endocytic recycling compartment which is necessary for LRP2 proteolysis, releasing a tail fragment which translocates to the nucleus and mediates transcriptional repression. The protein is Low density lipoprotein receptor adapter protein 1 of Rattus norvegicus (Rat).